The sequence spans 296 residues: 4-hydroxy-tetrahydrodipicolinate synthase (296 aa).

Threonine 49 contacts pyruvate. Catalysis depends on tyrosine 137, which acts as the Proton donor/acceptor. The Schiff-base intermediate with substrate role is filled by lysine 166. Valine 208 contacts pyruvate.

The protein belongs to the DapA family. As to quaternary structure, homotetramer; dimer of dimers.

It is found in the cytoplasm. The catalysed reaction is L-aspartate 4-semialdehyde + pyruvate = (2S,4S)-4-hydroxy-2,3,4,5-tetrahydrodipicolinate + H2O + H(+). The protein operates within amino-acid biosynthesis; L-lysine biosynthesis via DAP pathway; (S)-tetrahydrodipicolinate from L-aspartate: step 3/4. Catalyzes the condensation of (S)-aspartate-beta-semialdehyde [(S)-ASA] and pyruvate to 4-hydroxy-tetrahydrodipicolinate (HTPA). This is 4-hydroxy-tetrahydrodipicolinate synthase from Desulforamulus reducens (strain ATCC BAA-1160 / DSM 100696 / MI-1) (Desulfotomaculum reducens).